Consider the following 517-residue polypeptide: MATFVDTVTLHLRAGNGGNGCVSVRREKFKPLAGTDGGNGGNGGDIVLVADPQVTTLLAYHRGPHRSSRNGGPGMGDHRHGTLGETLELPVPVGTVVKDADGNELADMATPGMRFIAAEAGQGGLGNASLATTKRKAPGFALLGTQGYEGDVVLELKVVADVALVGYPSAGKSSLVAAISAAKPKIADYPFTTLHPNLGVVEVADSRYTVADVPGLIEGASEGKGLGLEFLRHVERCSALLHVLDCATLDPGRDPVSDLDIILTELAAYPVPDGQVPLLERPQLIALNKIDVPEARELAELVRPELEARGYRVFDISTVSHDGLRQLSFALAELVKDARTKAAEEPEAPRIVLRPRAVDEKPFTIRVDGGSYGDIYRVIGTKPERWVQQTDFRNDEAVGYLADRLAKLGVEDGLFKAGAVAGSSVVIGEGDGVVFDWEPTLTSTAELITSPRGADARVDPISRRTNQARREDYFARMDAKAEARAELVREGEAGLWADEDGTGQDGTDEDATTDAKA.

In terms of domain architecture, Obg spans 2 to 159 (ATFVDTVTLH…GDVVLELKVV (158 aa)). Residues 160–336 (ADVALVGYPS…LSFALAELVK (177 aa)) enclose the OBG-type G domain. GTP-binding positions include 166–173 (GYPSAGKS), 191–195 (FTTLH), 212–215 (DVPG), 288–291 (NKID), and 317–319 (STV). Residues S173 and T193 each contribute to the Mg(2+) site. The 85-residue stretch at 355-439 (PRAVDEKPFT…GDGVVFDWEP (85 aa)) folds into the OCT domain. Residues 490–517 (EGEAGLWADEDGTGQDGTDEDATTDAKA) are disordered. The segment covering 497–517 (ADEDGTGQDGTDEDATTDAKA) has biased composition (acidic residues).

Belongs to the TRAFAC class OBG-HflX-like GTPase superfamily. OBG GTPase family. As to quaternary structure, monomer. Mg(2+) serves as cofactor.

The protein resides in the cytoplasm. Its function is as follows. An essential GTPase which binds GTP, GDP and possibly (p)ppGpp with moderate affinity, with high nucleotide exchange rates and a fairly low GTP hydrolysis rate. Plays a role in control of the cell cycle, stress response, ribosome biogenesis and in those bacteria that undergo differentiation, in morphogenesis control. The chain is GTPase Obg from Clavibacter sepedonicus (Clavibacter michiganensis subsp. sepedonicus).